Reading from the N-terminus, the 263-residue chain is Tryptophan synthase alpha chain (263 aa).

Residues E47 and D58 each act as proton acceptor in the active site.

Belongs to the TrpA family. As to quaternary structure, tetramer of two alpha and two beta chains.

Its subcellular location is the plastid. The protein resides in the chloroplast. The catalysed reaction is (1S,2R)-1-C-(indol-3-yl)glycerol 3-phosphate + L-serine = D-glyceraldehyde 3-phosphate + L-tryptophan + H2O. It functions in the pathway amino-acid biosynthesis; L-tryptophan biosynthesis; L-tryptophan from chorismate: step 5/5. Functionally, the alpha subunit is responsible for the aldol cleavage of indoleglycerol phosphate to indole and glyceraldehyde 3-phosphate. This chain is Tryptophan synthase alpha chain, found in Antithamnion sp. (Red alga).